A 314-amino-acid polypeptide reads, in one-letter code: Serine protease 46 (314 aa).

Residues 44–281 (VVNGKVVEVG…FTQWIKRQIG (238 aa)) enclose the Peptidase S1 domain. Cysteine 69 and cysteine 85 are disulfide-bonded. Catalysis depends on charge relay system residues histidine 84 and aspartate 130. 3 cysteine pairs are disulfide-bonded: cysteine 164–cysteine 239, cysteine 197–cysteine 219, and cysteine 229–cysteine 257. Serine 233 functions as the Charge relay system in the catalytic mechanism. A helical transmembrane segment spans residues 293–313 (FLSPFILTGYILLVSLGSLWL).

The protein belongs to the peptidase S1 family.

Its subcellular location is the membrane. This chain is Serine protease 46 (Prss46), found in Rattus norvegicus (Rat).